A 386-amino-acid polypeptide reads, in one-letter code: Ribosomal RNA small subunit methyltransferase H (386 aa).

S-adenosyl-L-methionine is bound by residues 97-99 (GGH), Asp-116, Tyr-143, Asp-167, and Gln-174.

The protein belongs to the methyltransferase superfamily. RsmH family.

It is found in the cytoplasm. It catalyses the reaction cytidine(1402) in 16S rRNA + S-adenosyl-L-methionine = N(4)-methylcytidine(1402) in 16S rRNA + S-adenosyl-L-homocysteine + H(+). Functionally, specifically methylates the N4 position of cytidine in position 1402 (C1402) of 16S rRNA. This chain is Ribosomal RNA small subunit methyltransferase H, found in Mycobacterium avium (strain 104).